Reading from the N-terminus, the 511-residue chain is MSKVARSSSESDVQLWETEEDDMTEGDLGYGLGRKPGGIYEIEFSHRSRKRSDGKNFSPPPFPRKGEERNEASFQYSKHKSQQDTFPQVSRISNYRRQSSTVDSNSELSNEELRQCLNETLEEVEMLKTELEASQRQLRGKEEALKILQSMAILGKATSHTQAVLQKTMEQNRSLEKEINALQWEIEFDHNRFKNIEESWIQKYDRLNCENAVLKENLKVKTEEIKMLKSDNAVLNQRYLEALAMLDIKQQKMAQENMCCDKSGFAEASGLELAVLGACLCHGPGGNPCSCARMAASTRKLLLQLKQELEILQKSKEEAYVMADAFRIAFEQQLMRKNDQALQLTQMDKMHKKATKWMNWKHLKEDGFPSPRSKKTFGQRLLGMLPSENSSKRMEDQDSPQEVLKMLIDLLNDKEEALAHQRKVSYMLARALEDKDTASNENKEKNPIKENFPFNNPWRKTSEFSVLGDPIHSSVCILNSVGCICSIQHSQIDPNYRTLKRSHSLPSSIIF.

The segment covering 1–12 (MSKVARSSSESD) has biased composition (polar residues). Positions 1–110 (MSKVARSSSE…TVDSNSELSN (110 aa)) are disordered. Basic and acidic residues predominate over residues 43–54 (EFSHRSRKRSDG). The span at 83–108 (QDTFPQVSRISNYRRQSSTVDSNSEL) shows a compositional bias: polar residues. 2 coiled-coil regions span residues 105–243 (NSEL…LEAL) and 293–325 (RMAA…MADA). Position 504 is a phosphoserine (Ser-504).

It is found in the cytoplasm. Its function is as follows. May be involved in the regulation of cell migration. The protein is Coiled-coil domain-containing protein 125 (CCDC125) of Homo sapiens (Human).